The sequence spans 379 residues: Arginine biosynthesis bifunctional protein ArgJ (379 aa).

Substrate-binding residues include T140, K160, T171, E249, N374, and T379. Residue T171 is the Nucleophile of the active site.

The protein belongs to the ArgJ family. Heterotetramer of two alpha and two beta chains.

The protein localises to the cytoplasm. It carries out the reaction N(2)-acetyl-L-ornithine + L-glutamate = N-acetyl-L-glutamate + L-ornithine. The catalysed reaction is L-glutamate + acetyl-CoA = N-acetyl-L-glutamate + CoA + H(+). The protein operates within amino-acid biosynthesis; L-arginine biosynthesis; L-ornithine and N-acetyl-L-glutamate from L-glutamate and N(2)-acetyl-L-ornithine (cyclic): step 1/1. It functions in the pathway amino-acid biosynthesis; L-arginine biosynthesis; N(2)-acetyl-L-ornithine from L-glutamate: step 1/4. Catalyzes two activities which are involved in the cyclic version of arginine biosynthesis: the synthesis of N-acetylglutamate from glutamate and acetyl-CoA as the acetyl donor, and of ornithine by transacetylation between N(2)-acetylornithine and glutamate. This is Arginine biosynthesis bifunctional protein ArgJ from Archaeoglobus fulgidus (strain ATCC 49558 / DSM 4304 / JCM 9628 / NBRC 100126 / VC-16).